We begin with the raw amino-acid sequence, 122 residues long: Large ribosomal subunit protein uL14c (122 aa).

The protein belongs to the universal ribosomal protein uL14 family. As to quaternary structure, part of the 50S ribosomal subunit.

It is found in the plastid. It localises to the chloroplast. Functionally, binds to 23S rRNA. In Pinus koraiensis (Korean pine), this protein is Large ribosomal subunit protein uL14c.